The chain runs to 369 residues: Protein HGH1 homolog (369 aa).

This sequence belongs to the HGH1 family.

This is Protein HGH1 homolog from Drosophila melanogaster (Fruit fly).